Reading from the N-terminus, the 308-residue chain is Ribonuclease Z (308 aa).

Zn(2+)-binding residues include His61, His63, Asp65, His66, His139, Asp210, and His268. Asp65 functions as the Proton acceptor in the catalytic mechanism.

Belongs to the RNase Z family. As to quaternary structure, homodimer. The cofactor is Zn(2+).

The catalysed reaction is Endonucleolytic cleavage of RNA, removing extra 3' nucleotides from tRNA precursor, generating 3' termini of tRNAs. A 3'-hydroxy group is left at the tRNA terminus and a 5'-phosphoryl group is left at the trailer molecule.. Its function is as follows. Zinc phosphodiesterase, which displays some tRNA 3'-processing endonuclease activity. Probably involved in tRNA maturation, by removing a 3'-trailer from precursor tRNA. The chain is Ribonuclease Z from Natronomonas pharaonis (strain ATCC 35678 / DSM 2160 / CIP 103997 / JCM 8858 / NBRC 14720 / NCIMB 2260 / Gabara) (Halobacterium pharaonis).